Here is a 226-residue protein sequence, read N- to C-terminus: MNPIVINRLQRKLGYTFRQHDLLMQALTHRSASSKHNERLEFLGDSILSFVIANALYHRFPRVDEGDMSRMRATLVRGNTLAEMAREFDLGECLRLGPGELKSGGFRRESILADTVEALIGGIFLDSDIQTIERLILDWYRSRLEEISPGDKQKDPKTRLQEFLQGRHLPLPSYLVVQVRGEAHDQEFTIHCQVSGLSAPVVGVGSSRRKAEQAAAEQALKQLELE.

One can recognise an RNase III domain in the interval Ile-6–Asp-128. Glu-41 contributes to the Mg(2+) binding site. The active site involves Asp-45. The Mg(2+) site is built by Asp-114 and Glu-117. The active site involves Glu-117. The DRBM domain occupies Asp-155–Leu-225.

This sequence belongs to the ribonuclease III family. In terms of assembly, homodimer. It depends on Mg(2+) as a cofactor.

Its subcellular location is the cytoplasm. The catalysed reaction is Endonucleolytic cleavage to 5'-phosphomonoester.. Functionally, digests double-stranded RNA. Involved in the processing of primary rRNA transcript to yield the immediate precursors to the large and small rRNAs (23S and 16S). Processes some mRNAs, and tRNAs when they are encoded in the rRNA operon. Processes pre-crRNA and tracrRNA of type II CRISPR loci if present in the organism. The chain is Ribonuclease 3 from Edwardsiella ictaluri (strain 93-146).